The chain runs to 547 residues: Chaperonin GroEL (547 aa).

ATP is bound by residues 30–33, lysine 51, 87–91, glycine 415, and aspartate 495; these read TLGP and DGTTT.

The protein belongs to the chaperonin (HSP60) family. In terms of assembly, forms a cylinder of 14 subunits composed of two heptameric rings stacked back-to-back. Interacts with the co-chaperonin GroES.

It is found in the cytoplasm. The enzyme catalyses ATP + H2O + a folded polypeptide = ADP + phosphate + an unfolded polypeptide.. Functionally, together with its co-chaperonin GroES, plays an essential role in assisting protein folding. The GroEL-GroES system forms a nano-cage that allows encapsulation of the non-native substrate proteins and provides a physical environment optimized to promote and accelerate protein folding. The polypeptide is Chaperonin GroEL (Shewanella halifaxensis (strain HAW-EB4)).